Here is a 247-residue protein sequence, read N- to C-terminus: Uridylate kinase (247 aa).

17–20 (KFSG) is a binding site for ATP. Glycine 59 contacts UMP. ATP is bound by residues glycine 60 and arginine 64. Residues aspartate 79 and 140-147 (TGNPFFTT) each bind UMP. Residues threonine 167, tyrosine 173, and aspartate 176 each contribute to the ATP site.

This sequence belongs to the UMP kinase family. As to quaternary structure, homohexamer.

It is found in the cytoplasm. The enzyme catalyses UMP + ATP = UDP + ADP. Its pathway is pyrimidine metabolism; CTP biosynthesis via de novo pathway; UDP from UMP (UMPK route): step 1/1. With respect to regulation, inhibited by UTP. Functionally, catalyzes the reversible phosphorylation of UMP to UDP. The chain is Uridylate kinase from Legionella pneumophila subsp. pneumophila (strain Philadelphia 1 / ATCC 33152 / DSM 7513).